A 1316-amino-acid chain; its full sequence is Serine/threonine-protein kinase 36 (1316 aa).

Positions 4-254 constitute a Protein kinase domain; the sequence is YHVLEMIGEG…WPDLLHHPFI (251 aa). Residues 10-18 and lysine 33 each bind ATP; that span reads IGEGSFGRV. Aspartate 125 (proton acceptor) is an active-site residue. Residues 389-418 form a disordered region; that stretch reads QGFPEPRPEAMGRQSTDVVDPENEEPDSDD. Residues 407–418 show a composition bias toward acidic residues; sequence VDPENEEPDSDD.

The protein belongs to the protein kinase superfamily. Ser/Thr protein kinase family. As to quaternary structure, interacts with SPAG16 and KIF27. It depends on Mg(2+) as a cofactor. In terms of tissue distribution, weakly expressed in the heart and thymus, present at moderate to high levels in the lungs, pancreas, and kidneys and at higher levels in the brain and cerebellum. Very highly expressed in the testis.

The protein resides in the cytoplasm. The protein localises to the nucleus. Its subcellular location is the cytoskeleton. It localises to the cilium axoneme. The catalysed reaction is L-seryl-[protein] + ATP = O-phospho-L-seryl-[protein] + ADP + H(+). It catalyses the reaction L-threonyl-[protein] + ATP = O-phospho-L-threonyl-[protein] + ADP + H(+). Its function is as follows. Serine/threonine protein kinase which plays an important role in the sonic hedgehog (Shh) pathway by regulating the activity of GLI transcription factors. Controls the activity of the transcriptional regulators GLI1, GLI2 and GLI3 by opposing the effect of SUFU and promoting their nuclear localization. GLI2 requires an additional function of STK36 to become transcriptionally active, but the enzyme does not need to possess an active kinase catalytic site for this to occur. Required for postnatal development, possibly by regulating the homeostasis of cerebral spinal fluid or ciliary function. Essential for construction of the central pair apparatus of motile cilia. This chain is Serine/threonine-protein kinase 36, found in Mus musculus (Mouse).